The primary structure comprises 68 residues: KCNQ1 downstream neighbor protein (68 aa).

The disordered stretch occupies residues 28-68 (GVASGCSPSKASQEARGKEKCPTLNGQPQWSALFTLPPQRE).

Shows reduced expression in Wilms' tumor samples.

In Homo sapiens (Human), this protein is KCNQ1 downstream neighbor protein (KCNQ1DN).